Consider the following 74-residue polypeptide: MTDQPAQNGLIPPPTSEPSKAAASAETKPKKRICCACPDTKKLRDECIVEHGESACTKWIEAHKICLRAEGFNV.

A disordered region spans residues 1 to 30 (MTDQPAQNGLIPPPTSEPSKAAASAETKPK). The Cu cation site is built by Cys34 and Cys35. A CHCH domain is found at 34–74 (CCACPDTKKLRDECIVEHGESACTKWIEAHKICLRAEGFNV). Short sequence motifs (cx9C motif) lie at residues 37–47 (CPDTKKLRDEC) and 56–66 (CTKWIEAHKIC). Disulfide bonds link Cys37-Cys66 and Cys47-Cys56.

The protein belongs to the COX17 family.

Its subcellular location is the mitochondrion intermembrane space. Functionally, copper chaperone for cytochrome c oxidase (COX). Binds 2 copper ions and delivers them to the Cu(A) site of COX. Can complement the yeast mutant cox17. The protein is Cytochrome c oxidase copper chaperone 1 (COX17-1) of Arabidopsis thaliana (Mouse-ear cress).